Here is a 588-residue protein sequence, read N- to C-terminus: Sulfite reductase [NADPH] hemoprotein beta-component (588 aa).

[4Fe-4S] cluster-binding residues include C442, C448, C487, and C491. C491 is a siroheme binding site.

This sequence belongs to the nitrite and sulfite reductase 4Fe-4S domain family. In terms of assembly, alpha(8)-beta(8). The alpha component is a flavoprotein, the beta component is a hemoprotein. Requires siroheme as cofactor. The cofactor is [4Fe-4S] cluster.

It carries out the reaction hydrogen sulfide + 3 NADP(+) + 3 H2O = sulfite + 3 NADPH + 4 H(+). It participates in sulfur metabolism; hydrogen sulfide biosynthesis; hydrogen sulfide from sulfite (NADPH route): step 1/1. Its function is as follows. Component of the sulfite reductase complex that catalyzes the 6-electron reduction of sulfite to sulfide. This is one of several activities required for the biosynthesis of L-cysteine from sulfate. This is Sulfite reductase [NADPH] hemoprotein beta-component from Actinobacillus pleuropneumoniae serotype 7 (strain AP76).